The primary structure comprises 187 residues: Ribosome-recycling factor (187 aa).

This sequence belongs to the RRF family.

It localises to the cytoplasm. Its function is as follows. Responsible for the release of ribosomes from messenger RNA at the termination of protein biosynthesis. May increase the efficiency of translation by recycling ribosomes from one round of translation to another. This chain is Ribosome-recycling factor, found in Methylobacterium radiotolerans (strain ATCC 27329 / DSM 1819 / JCM 2831 / NBRC 15690 / NCIMB 10815 / 0-1).